A 473-amino-acid chain; its full sequence is tRNA-2-methylthio-N(6)-dimethylallyladenosine synthase (473 aa).

One can recognise an MTTase N-terminal domain in the interval 5-125; sequence RKLHIKSYGC…LPQLLARADQ (121 aa). 6 residues coordinate [4Fe-4S] cluster: C14, C50, C88, C166, C170, and C173. In terms of domain architecture, Radical SAM core spans 152 to 384; sequence RARGISAFVT…QQLIDSQQSA (233 aa). The TRAM domain occupies 387–459; it reads KAAIGQTVDV…RYSLLGELAA (73 aa).

Belongs to the methylthiotransferase family. MiaB subfamily. Monomer. [4Fe-4S] cluster serves as cofactor.

It is found in the cytoplasm. It carries out the reaction N(6)-dimethylallyladenosine(37) in tRNA + (sulfur carrier)-SH + AH2 + 2 S-adenosyl-L-methionine = 2-methylsulfanyl-N(6)-dimethylallyladenosine(37) in tRNA + (sulfur carrier)-H + 5'-deoxyadenosine + L-methionine + A + S-adenosyl-L-homocysteine + 2 H(+). Functionally, catalyzes the methylthiolation of N6-(dimethylallyl)adenosine (i(6)A), leading to the formation of 2-methylthio-N6-(dimethylallyl)adenosine (ms(2)i(6)A) at position 37 in tRNAs that read codons beginning with uridine. This Rhodopseudomonas palustris (strain BisB5) protein is tRNA-2-methylthio-N(6)-dimethylallyladenosine synthase.